The chain runs to 257 residues: Snake venom serine protease rhinocerase 4 (257 aa).

A signal peptide spans 1-17 (VLIRVLANLLVLQLSYA). The propeptide occupies 18-23 (QKSSEL). A Peptidase S1 domain is found at 24–248 (VIGGAECNIN…YTDWIRSIIG (225 aa)). 6 disulfide bridges follow: Cys30–Cys162, Cys49–Cys65, Cys97–Cys255, Cys141–Cys209, Cys173–Cys188, and Cys199–Cys224. An N-linked (GlcNAc...) asparagine glycan is attached at Asn43. Catalysis depends on His64, which acts as the Charge relay system. N-linked (GlcNAc...) asparagine glycans are attached at residues Asn78 and Asn100. The active-site Charge relay system is the Asp109. The active-site Charge relay system is the Ser203. Residue Asn250 is glycosylated (N-linked (GlcNAc...) asparagine).

Belongs to the peptidase S1 family. Snake venom subfamily. In terms of tissue distribution, expressed by the venom gland.

The protein localises to the secreted. Its function is as follows. Snake venom serine protease that may act in the hemostasis system of the prey. This Bitis rhinoceros (West African gaboon viper) protein is Snake venom serine protease rhinocerase 4.